A 506-amino-acid chain; its full sequence is MPNEIFTINLNAQAIIPEAFILLGIVGTLLVDLAGEKTASKWAPSICYLSIGSSLLSLTLQWNNPVESAFLGSFNSDNLAIAFRAIIALSTLVSLLISWRYTEQSGSPIGEFAAIVLSATLGAMLLCGSTDLISVFISLETLSVASYLLSGYLKRDPRSSEAALKYLLVGSAAAAVYLYGSSFLYGLSGSTNLTTIGLEIINKPSFITSLALVFVLSTVAFKIAAVPFHQWTPDVYEGSPTPVVAFLSVGSKTAGFAFAIRILSTTFSSFDEEWKLLFTILAILSMALGNVVALAQTSMKRMLAYSSIGQAGFVMIGIVSGTQDGLSAAVLYLAAYLFMNLGAFSCVILFSLRTGSDRILDYSGLYQKDPLITLGLSLCLLSLGGLPPMLGFFGKIYLFFAGWANHQYLLVIVGLVTSVISIYYYISVIKMMVVKEPQEASEIVKSYPEVNWGIAGLPPLRVALYTCVAVTALGGILSNPLFKLANTAVSETPFLQDVIAAANNIS.

13 consecutive transmembrane segments (helical) span residues 14–34, 42–62, 79–99, 108–128, 132–152, 167–187, 206–226, 240–260, 276–296, 302–322, 330–350, 374–394, and 409–429; these read AIIP…VDLA, WAPS…TLQW, LAIA…LISW, PIGE…LLCG, LISV…LSGY, LLVG…LYGL, FITS…IAAV, PTPV…AFAI, LLFT…ALAQ, MLAY…VSGT, VLYL…VILF, LGLS…GFFG, and LLVI…ISVI.

It belongs to the complex I subunit 2 family. NDH-1 can be composed of about 15 different subunits; different subcomplexes with different compositions have been identified which probably have different functions.

It is found in the cellular thylakoid membrane. It carries out the reaction a plastoquinone + NADH + (n+1) H(+)(in) = a plastoquinol + NAD(+) + n H(+)(out). It catalyses the reaction a plastoquinone + NADPH + (n+1) H(+)(in) = a plastoquinol + NADP(+) + n H(+)(out). Functionally, NDH-1 shuttles electrons from an unknown electron donor, via FMN and iron-sulfur (Fe-S) centers, to quinones in the respiratory and/or the photosynthetic chain. The immediate electron acceptor for the enzyme in this species is believed to be plastoquinone. Couples the redox reaction to proton translocation, and thus conserves the redox energy in a proton gradient. Cyanobacterial NDH-1 also plays a role in inorganic carbon-concentration. In Prochlorococcus marinus (strain MIT 9301), this protein is NAD(P)H-quinone oxidoreductase subunit 2.